Reading from the N-terminus, the 120-residue chain is NAD(P)H-quinone oxidoreductase subunit 3, chloroplastic (120 aa).

A run of 3 helical transmembrane segments spans residues 2-22 (FLLYEYDIFWAFLIISSVIPI), 64-84 (MFALVFVVFDVETIFLYPWAL), and 88-108 (ILGVSVFIEALIFVLILVLGL).

It belongs to the complex I subunit 3 family. NDH is composed of at least 16 different subunits, 5 of which are encoded in the nucleus.

The protein localises to the plastid. Its subcellular location is the chloroplast thylakoid membrane. The catalysed reaction is a plastoquinone + NADH + (n+1) H(+)(in) = a plastoquinol + NAD(+) + n H(+)(out). It catalyses the reaction a plastoquinone + NADPH + (n+1) H(+)(in) = a plastoquinol + NADP(+) + n H(+)(out). NDH shuttles electrons from NAD(P)H:plastoquinone, via FMN and iron-sulfur (Fe-S) centers, to quinones in the photosynthetic chain and possibly in a chloroplast respiratory chain. The immediate electron acceptor for the enzyme in this species is believed to be plastoquinone. Couples the redox reaction to proton translocation, and thus conserves the redox energy in a proton gradient. The polypeptide is NAD(P)H-quinone oxidoreductase subunit 3, chloroplastic (Oenothera argillicola (Appalachian evening primrose)).